A 319-amino-acid chain; its full sequence is HTH-type transcriptional regulator YidZ (319 aa).

An HTH lysR-type domain is found at 8–65; sequence LDLNLLLCLQLLMQERSVTKAAKRMNVTPSAVSKSLAKLRAWFDDPLFVNTPLGLAPT. A DNA-binding region (H-T-H motif) is located at residues 25–44; it reads VTKAAKRMNVTPSAVSKSLA.

This sequence belongs to the LysR transcriptional regulatory family.

Functionally, involved in anaerobic NO protection. The sequence is that of HTH-type transcriptional regulator YidZ from Salmonella agona (strain SL483).